Here is a 339-residue protein sequence, read N- to C-terminus: GTP 3',8-cyclase (339 aa).

Residues 13–249 form the Radical SAM core domain; it reads RYGRPLRDLR…GEVAQRHAFA (237 aa). Position 22 (Arg22) interacts with GTP. Residues Cys29 and Cys33 each contribute to the [4Fe-4S] cluster site. Tyr35 contacts S-adenosyl-L-methionine. [4Fe-4S] cluster is bound at residue Cys36. Arg75 contacts GTP. An S-adenosyl-L-methionine-binding site is contributed by Gly79. Residue Thr106 coordinates GTP. Ser130 contacts S-adenosyl-L-methionine. Lys168 lines the GTP pocket. Met202 is a binding site for S-adenosyl-L-methionine. The [4Fe-4S] cluster site is built by Cys266 and Cys269. Position 271–273 (271–273) interacts with GTP; that stretch reads RAR. Residue Cys283 participates in [4Fe-4S] cluster binding.

It belongs to the radical SAM superfamily. MoaA family. In terms of assembly, monomer and homodimer. The cofactor is [4Fe-4S] cluster.

It carries out the reaction GTP + AH2 + S-adenosyl-L-methionine = (8S)-3',8-cyclo-7,8-dihydroguanosine 5'-triphosphate + 5'-deoxyadenosine + L-methionine + A + H(+). Its pathway is cofactor biosynthesis; molybdopterin biosynthesis. Its function is as follows. Catalyzes the cyclization of GTP to (8S)-3',8-cyclo-7,8-dihydroguanosine 5'-triphosphate. The polypeptide is GTP 3',8-cyclase (Xanthomonas campestris pv. campestris (strain 8004)).